The primary structure comprises 675 residues: G-protein-signaling modulator 1 (675 aa).

A mediates association with membranes region spans residues methionine 1–arginine 509. 9 TPR repeats span residues cysteine 28 to aspartate 61, serine 66 to isoleucine 99, alanine 106 to glutamine 139, alanine 146 to valine 181, glutamate 183 to leucine 202, glycine 209 to phenylalanine 242, arginine 249 to leucine 282, alanine 289 to leucine 322, and glycine 329 to isoleucine 362. Residues aspartate 364–isoleucine 487 are interaction with STK11/LKB1. Positions serine 391–leucine 412 are disordered. Serine 413 carries the post-translational modification Phosphoserine. Position 421 is an omega-N-methylarginine (arginine 421). A compositionally biased stretch (basic and acidic residues) spans leucine 424–serine 442. The disordered stretch occupies residues leucine 424–serine 492. A phosphoserine mark is found at serine 445, serine 469, serine 471, serine 492, and serine 493. Residues lysine 454 to serine 469 show a composition bias toward basic and acidic residues. In terms of domain architecture, GoLoco 1 spans glutamate 495–leucine 517. Phosphoserine is present on residues serine 545 and serine 569. 3 consecutive GoLoco domains span residues threonine 548–valine 570, glycine 596–proline 618, and aspartate 630–leucine 652. Disordered regions lie at residues arginine 610–aspartate 630 and arginine 644–serine 675.

The protein belongs to the GPSM family. In terms of assembly, interacts with GNAI1, GNAI2 and GNAI3 preferentially in their GDP-bound state. May also interact with GNAO1. Interacts with STK11/LKB1 and MACF1. Interacts with INSC/inscuteable and FRMPD1. Post-translationally, phosphorylation regulates interaction with G(i/o) alpha. Expressed in intestinal cells.

It is found in the cytoplasm. Its subcellular location is the cytosol. The protein localises to the endoplasmic reticulum membrane. The protein resides in the golgi apparatus membrane. It localises to the cell membrane. Functionally, guanine nucleotide dissociation inhibitor (GDI) which functions as a receptor-independent activator of heterotrimeric G-protein signaling. Keeps G(i/o) alpha subunit in its GDP-bound form thus uncoupling heterotrimeric G-proteins signaling from G protein-coupled receptors. Controls spindle orientation and asymmetric cell fate of cerebral cortical progenitors. May also be involved in macroautophagy in intestinal cells. May play a role in drug addiction. The sequence is that of G-protein-signaling modulator 1 (GPSM1) from Homo sapiens (Human).